A 555-amino-acid chain; its full sequence is Gamma-aminobutyric acid receptor subunit alpha-4 (555 aa).

Residues methionine 1–glycine 35 form the signal peptide. Residues glutamine 36–phenylalanine 259 lie on the Extracellular side of the membrane. An N-linked (GlcNAc...) asparagine glycan is attached at asparagine 47. Arginine 100 provides a ligand contact to 4-aminobutanoate. 2 N-linked (GlcNAc...) asparagine glycosylation sites follow: asparagine 144 and asparagine 157. Threonine 163 serves as a coordination point for 4-aminobutanoate. A disulfide bridge links cysteine 172 with cysteine 186. A helical membrane pass occupies residues methionine 260–isoleucine 280. Over asparagine 281 to serine 284 the chain is Cytoplasmic. The helical transmembrane segment at valine 285–serine 305 threads the bilayer. Topologically, residues alanine 306–alanine 318 are extracellular. Residues methionine 319–asparagine 341 form a helical membrane-spanning segment. Residues tyrosine 342–lysine 518 are Cytoplasmic-facing. Disordered regions lie at residues lysine 354–proline 435 and glycine 495–threonine 516. Residues serine 410–serine 421 show a composition bias toward low complexity. Positions glutamate 422–proline 435 are enriched in polar residues. Residues isoleucine 519–lysine 545 traverse the membrane as a helical segment. The Extracellular portion of the chain corresponds to aspartate 546 to methionine 555.

It belongs to the ligand-gated ion channel (TC 1.A.9) family. Gamma-aminobutyric acid receptor (TC 1.A.9.5) subfamily. GABRA4 sub-subfamily. In terms of assembly, heteropentamer, formed by a combination of alpha (GABRA1-6), beta (GABRB1-3), gamma (GABRG1-3), delta (GABRD), epsilon (GABRE), rho (GABRR1-3), pi (GABRP) and theta (GABRQ) chains, each subunit exhibiting distinct physiological and pharmacological properties. As to expression, expressed in the brain.

The protein localises to the cell membrane. It localises to the postsynaptic cell membrane. It catalyses the reaction chloride(in) = chloride(out). Its activity is regulated as follows. Potentiated by histamine. Alpha subunit of the heteropentameric ligand-gated chloride channel gated by gamma-aminobutyric acid (GABA), a major inhibitory neurotransmitter in the brain. GABA-gated chloride channels, also named GABA(A) receptors (GABAAR), consist of five subunits arranged around a central pore and contain GABA active binding site(s) located at the alpha and beta subunit interface(s). When activated by GABA, GABAARs selectively allow the flow of chloride anions across the cell membrane down their electrochemical gradient. GABAARs containing alpha-4 are predominantly extrasynaptic, contributing to tonic inhibition in dentate granule cells and thalamic relay neurons. Extrasynaptic alpha-4-containing GABAARs control levels of excitability and network activity. GABAARs containing alpha-4 are often found with the delta or gamma-2 subunits, in combination with beta subunits. GABAAR containing alpha-4-beta-3-delta subunits can simultaneously bind GABA and histamine where histamine binds at the interface of two neighboring beta subunits, which may be involved in the regulation of sleep and wakefulness. This is Gamma-aminobutyric acid receptor subunit alpha-4 (GABRA4) from Bos taurus (Bovine).